Here is a 348-residue protein sequence, read N- to C-terminus: UPF0324 membrane protein BH02290 (348 aa).

A run of 11 helical transmembrane segments spans residues 13–35 (AFLNDFSPGILACLIISVLAYGL), 45–67 (QAWLESLVLAILLGSITGSCFTL), 74–96 (GITFCAKTLLEIAIVLLGASISV), 106–128 (LLASIIFVIFVTLILSFTIGRLF), 135–157 (AMLVACGNAICGNSAIVAVAPVI), 167–189 (SIAFTALLGVLIILFLPFLHPFL), 196–218 (YGVLSGMVVYAVPQVLAATASVS), 223–245 (QIATVVKLVRVLMLGPLIFALSI), 257–275 (LHTLVPWFIIGFIFMMLIR), 285–307 (LIPIRFIAQLFTVISMAALGLGV), and 319–341 (VILASTCSILILGVCSLIMIQLN).

The protein belongs to the UPF0324 family.

It is found in the cell membrane. The sequence is that of UPF0324 membrane protein BH02290 from Bartonella henselae (strain ATCC 49882 / DSM 28221 / CCUG 30454 / Houston 1) (Rochalimaea henselae).